An 877-amino-acid chain; its full sequence is Putative leucine-rich repeat receptor-like serine/threonine-protein kinase At2g19230 (877 aa).

Residues 1–24 form the signal peptide; sequence MGNFNFLPLVSFASFVVVLVLVCA. Residues 25-517 are Extracellular-facing; the sequence is QDQSGFVSID…RNKKTERKEY (493 aa). N142, N233, N261, N295, N405, and N420 each carry an N-linked (GlcNAc...) asparagine glycan. 2 LRR repeats span residues 439–462 and 463–484; these read PLQKLDLSNNRLTGTVPDFLANLP and DLTELNLEENKLTGILPEKLLE. Residues 518-538 traverse the membrane as a helical segment; the sequence is IIPSVASVTGLFFLLLALISF. Residues 539 to 877 lie on the Cytoplasmic side of the membrane; sequence WQFKKRQQSV…VDPGVLPQPR (339 aa). In terms of domain architecture, Protein kinase spans 569-842; it reads NNFERVLGQG…QVVAELKESL (274 aa). ATP-binding positions include 575-583 and K596; that span reads LGQGGFGKV. Y641 carries the post-translational modification Phosphotyrosine. D692 acts as the Proton acceptor in catalysis. Residue S726 is modified to Phosphoserine. Phosphothreonine occurs at positions 727 and 732.

The protein belongs to the protein kinase superfamily. Ser/Thr protein kinase family.

The protein resides in the cell membrane. The enzyme catalyses L-seryl-[protein] + ATP = O-phospho-L-seryl-[protein] + ADP + H(+). The catalysed reaction is L-threonyl-[protein] + ATP = O-phospho-L-threonyl-[protein] + ADP + H(+). In Arabidopsis thaliana (Mouse-ear cress), this protein is Putative leucine-rich repeat receptor-like serine/threonine-protein kinase At2g19230.